Consider the following 403-residue polypeptide: Lipid droplet-regulating VLDL assembly factor AUP1 (403 aa).

The Cytoplasmic portion of the chain corresponds to 1-21; the sequence is MEQPSVESLLELRRFPRKQLS. An intramembrane segment occupies 22–42; sequence LILLLLYSPLGLCLFLIRLFI. At 43 to 399 the chain is on the cytoplasmic side; the sequence is GAHVFLVSCV…GSVGREEEEK (357 aa). The 43-residue stretch at 286 to 328 folds into the CUE domain; that stretch reads TQMQMAQHVKEVLPQVPLSAIHRDLGHTGCIDTTITNFLEGRV.

Belongs to the AUP1 family.

The protein localises to the endoplasmic reticulum membrane. It is found in the lipid droplet. Plays a role in the translocation of terminally misfolded proteins from the endoplasmic reticulum lumen to the cytoplasm and their degradation by the proteasome. Plays a role in lipid droplet formation. Induces lipid droplet clustering. The sequence is that of Lipid droplet-regulating VLDL assembly factor AUP1 from Xenopus tropicalis (Western clawed frog).